The sequence spans 93 residues: Small ribosomal subunit protein uS19 (93 aa).

The protein belongs to the universal ribosomal protein uS19 family.

Its function is as follows. Protein S19 forms a complex with S13 that binds strongly to the 16S ribosomal RNA. This Frankia casuarinae (strain DSM 45818 / CECT 9043 / HFP020203 / CcI3) protein is Small ribosomal subunit protein uS19.